Consider the following 92-residue polypeptide: Small ribosomal subunit protein bS20 (92 aa).

The protein belongs to the bacterial ribosomal protein bS20 family.

In terms of biological role, binds directly to 16S ribosomal RNA. The chain is Small ribosomal subunit protein bS20 from Methylacidiphilum infernorum (isolate V4) (Methylokorus infernorum (strain V4)).